The chain runs to 435 residues: GPI-anchor transamidase component PIGU (435 aa).

The Cytoplasmic segment spans residues 2-3; sequence AA. The helical transmembrane segment at 4-22 threads the bilayer; it reads PLVLVLVVAVTVRAALFRS. At 23–78 the chain is on the lumenal side; that stretch reads SLAEFISERVEVVSPLSSWKRVVEGLSLLDLGVSPYSGAVFHETPLIIYLFHFLID. The helical transmembrane segment at 79–99 threads the bilayer; sequence YAELVFMITDALTAIALYFAI. At 100–136 the chain is on the cytoplasmic side; it reads QDFNKVVFKKQKLLLELDQYAPDVAELIRTPMEMRYI. 4 consecutive transmembrane segments (helical) span residues 137 to 158, 159 to 178, 179 to 194, and 195 to 205; these read PLKV…VAKS, TCAI…IKGS, AFLS…YQSL, and YPLTLFVPGLL. The Cytoplasmic portion of the chain corresponds to 206–222; it reads YLLQRQYIPVKMKSKAF. A cardiolipin is bound by residues K216 and M217. The helical transmembrane segment at 223–244 threads the bilayer; it reads WIFSWEYAMMYVGSLVVIICLS. Residues 245 to 286 lie on the Lumenal side of the membrane; it reads FFLLSSWDFIPAVYGFILSVPDLTPNIGLFWYFFAEMFEHFS. Residues 287-306 form a helical membrane-spanning segment; sequence LFFVCVFQINVFFYTIPLAI. Topologically, residues 307-311 are cytoplasmic; that stretch reads KLKEH. Residue K309 participates in a cardiolipin binding. 2 helical membrane passes run 312-331 and 332-345; these read PIFF…SYPT and VGDV…FPVW. The Cytoplasmic portion of the chain corresponds to 346–354; it reads NHLYRFLRN. The chain crosses the membrane as a helical span at residues 355 to 372; sequence IFVLTCIIIVCSLLFPVL. Over 373–384 the chain is Lumenal; it reads WHLWIYAGSANS. A 2-acyl-6-[6-phosphoethanolamine-alpha-D-mannosyl-(1-&gt;2)-6-phosphoethanolamine-alpha-D-mannosyl-(1-&gt;6)-2-phosphoethanolamine-alpha-D-mannosyl-(1-&gt;4)-alpha-D-glucosaminyl]-1-(1-radyl,2-acyl-sn-glycero-3-phospho)-1D-myo-inositol-binding residues include N383 and N385. Residues 385–406 traverse the membrane as a helical segment; that stretch reads NFFYAITLTFNVGQILLISDYF. At 407 to 435 the chain is on the cytoplasmic side; sequence YAFLRREYYLTHGLYLTAKDGTEAMLVLK.

The protein belongs to the PIGU family. Heteropentamer. Part of the GPI-anchor transamidase complex, consisting of PIGK, PIGT, PIGS, PIGU and GAA1.

It localises to the endoplasmic reticulum membrane. The protein operates within glycolipid biosynthesis; glycosylphosphatidylinositol-anchor biosynthesis. Functionally, component of the glycosylphosphatidylinositol-anchor (GPI-anchor) transamidase (GPI-T) complex that catalyzes the formation of the linkage between a proprotein and a GPI-anchor and participates in GPI anchored protein biosynthesis. Binds the lipid portion of GPI-anchor. May act as an organizer in the transmembrane layer to recruit other subunits, and thus is essential for assembly of the complex. In Homo sapiens (Human), this protein is GPI-anchor transamidase component PIGU.